Consider the following 419-residue polypeptide: UDP-N-acetylglucosamine 1-carboxyvinyltransferase (419 aa).

22–23 (KN) is a binding site for phosphoenolpyruvate. Arg-93 serves as a coordination point for UDP-N-acetyl-alpha-D-glucosamine. Residue Cys-117 is the Proton donor of the active site. Cys-117 is modified (2-(S-cysteinyl)pyruvic acid O-phosphothioketal). 2 residues coordinate UDP-N-acetyl-alpha-D-glucosamine: Asp-306 and Ile-328.

Belongs to the EPSP synthase family. MurA subfamily.

The protein localises to the cytoplasm. The enzyme catalyses phosphoenolpyruvate + UDP-N-acetyl-alpha-D-glucosamine = UDP-N-acetyl-3-O-(1-carboxyvinyl)-alpha-D-glucosamine + phosphate. The protein operates within cell wall biogenesis; peptidoglycan biosynthesis. Functionally, cell wall formation. Adds enolpyruvyl to UDP-N-acetylglucosamine. In Ruthia magnifica subsp. Calyptogena magnifica, this protein is UDP-N-acetylglucosamine 1-carboxyvinyltransferase.